The primary structure comprises 145 residues: Peptidyl-prolyl cis-trans isomerase (145 aa).

The 145-residue stretch at 1–145 folds into the PPIase cyclophilin-type domain; the sequence is MTQAILETEK…LSVKIVTDAA (145 aa).

The protein belongs to the cyclophilin-type PPIase family.

It carries out the reaction [protein]-peptidylproline (omega=180) = [protein]-peptidylproline (omega=0). Its function is as follows. PPIases accelerate the folding of proteins. It catalyzes the cis-trans isomerization of proline imidic peptide bonds in oligopeptides. The sequence is that of Peptidyl-prolyl cis-trans isomerase (rot) from Synechococcus elongatus (strain ATCC 33912 / PCC 7942 / FACHB-805) (Anacystis nidulans R2).